Consider the following 519-residue polypeptide: Glutamate--cysteine ligase (519 aa).

Belongs to the glutamate--cysteine ligase type 1 family. Type 1 subfamily.

The catalysed reaction is L-cysteine + L-glutamate + ATP = gamma-L-glutamyl-L-cysteine + ADP + phosphate + H(+). It participates in sulfur metabolism; glutathione biosynthesis; glutathione from L-cysteine and L-glutamate: step 1/2. The sequence is that of Glutamate--cysteine ligase from Photorhabdus laumondii subsp. laumondii (strain DSM 15139 / CIP 105565 / TT01) (Photorhabdus luminescens subsp. laumondii).